The chain runs to 177 residues: Bifunctional protein PyrR (177 aa).

The PRPP-binding signature appears at 99 to 111 (VVLVDDVLFTGRT).

This sequence belongs to the purine/pyrimidine phosphoribosyltransferase family. PyrR subfamily.

It catalyses the reaction UMP + diphosphate = 5-phospho-alpha-D-ribose 1-diphosphate + uracil. Functionally, regulates the transcription of the pyrimidine nucleotide (pyr) operon in response to exogenous pyrimidines. Also displays a weak uracil phosphoribosyltransferase activity which is not physiologically significant. The protein is Bifunctional protein PyrR of Citrifermentans bemidjiense (strain ATCC BAA-1014 / DSM 16622 / JCM 12645 / Bem) (Geobacter bemidjiensis).